Reading from the N-terminus, the 529-residue chain is Peptide chain release factor 3 (529 aa).

One can recognise a tr-type G domain in the interval 11–280 (NSRRTFAIIS…AFINWAPEPK (270 aa)). GTP-binding positions include 20 to 27 (SHPDAGKT), 88 to 92 (DTPGH), and 142 to 145 (NKMD).

This sequence belongs to the TRAFAC class translation factor GTPase superfamily. Classic translation factor GTPase family. PrfC subfamily.

The protein resides in the cytoplasm. Functionally, increases the formation of ribosomal termination complexes and stimulates activities of RF-1 and RF-2. It binds guanine nucleotides and has strong preference for UGA stop codons. It may interact directly with the ribosome. The stimulation of RF-1 and RF-2 is significantly reduced by GTP and GDP, but not by GMP. This is Peptide chain release factor 3 from Acinetobacter baylyi (strain ATCC 33305 / BD413 / ADP1).